Consider the following 427-residue polypeptide: Caspase recruitment domain-containing protein 8 (427 aa).

A disordered region spans residues 1-23 (MGIPTSSVSEEQESSEGQDSGDI). Residues 51 to 186 (FLGPEGNVDV…FYAVLEKPSF (136 aa)) are ZU5. Residues 51–336 (FLGPEGNVDV…IQLGAASAPP (286 aa)) enclose the FIIND domain. Residues 187–336 (SLMGILLRIA…IQLGAASAPP (150 aa)) are UPA. Positions 336 to 426 (PAFSGAAFVK…YLVSYLRQQS (91 aa)) constitute a CARD domain.

In terms of assembly, interacts with DPP9; leading to inhibit activation of the inflammasome. DPP9 acts via formation of a ternary complex, composed of a DPP9 homodimer, one full-length CARD8 protein, and one cleaved C-terminus of CARD8 (Caspase recruitment domain-containing protein 8, C-terminus). Interacts with DPP8; leading to inhibit activation of the inflammasome, probably via formation of a ternary complex with DPP8. Interacts with NLRP3. Interacts with IKBKG/NEMO. Interacts with DRAL. Binds to caspase-1 (CASP1), CARD16/pseudo-ICE and CARD18/ICEBERG. Interacts with NLRP2 (via NACHT domain). As to quaternary structure, interacts with the C-terminal part of CARD8 (Caspase recruitment domain-containing protein 8, C-terminus) in absence of pathogens and other damage-associated signals. Interacts with the N-terminal part of CARD8 (Caspase recruitment domain-containing protein 8, N-terminus) in absence of pathogens and other damage-associated signals. Homomultimer; forms the CARD8 inflammasome polymeric complex, a filament composed of homopolymers of this form in response to pathogens and other damage-associated signals. The CARD8 inflammasome polymeric complex directly recruits pro-caspase-1 (proCASP1) independently of PYCARD/ASC. Interacts (via CARD domain) with CASP1 (via CARD domain); leading to CASP1 activation. Undergoes autocatalytic processing within the FIIND domain to generate the N-terminal and C-terminal parts, which are associated non-covalently in absence of pathogens and other damage-associated signals. In terms of processing, ubiquitinated by the N-end rule pathway in response to pathogens and other damage-associated signals, leading to its degradation by the proteasome and subsequent release of the cleaved C-terminal part of the protein (Caspase recruitment domain-containing protein 8, C-terminus), which polymerizes and forms the CARD8 inflammasome.

It is found in the cytoplasm. The protein resides in the nucleus. Its subcellular location is the inflammasome. With respect to regulation, CARD8 inflammasome is inhibited by DPP8 and DPP9, which sequester the C-terminal fragment of CARD8 (Caspase recruitment domain-containing protein 8, C-terminus) in a ternary complex, thereby preventing CARD8 oligomerization and activation. CARD8 inflammasome is activated by Val-boroPro (Talabostat, PT-100), an inhibitor of dipeptidyl peptidases DPP8 and DPP9. Val-boroPro relieves inhibition of DPP8 and/or DPP9 by inducing the proteasome-mediated destruction of the N-terminal part of CARD8, releasing its C-terminal part from autoinhibition. Functionally, inflammasome sensor, which mediates inflammasome activation in response to various pathogen-associated signals, leading to subsequent pyroptosis of CD4(+) T-cells and macrophages. Inflammasomes are supramolecular complexes that assemble in the cytosol in response to pathogens and other damage-associated signals and play critical roles in innate immunity and inflammation. Acts as a recognition receptor (PRR): recognizes specific pathogens and other damage-associated signals, such as Val-boroPro inhibitor, and mediates CARD8 inflammasome activation. In response to pathogen-associated signals, the N-terminal part of CARD8 is degraded by the proteasome, releasing the cleaved C-terminal part of the protein (Caspase recruitment domain-containing protein 8, C-terminus), which polymerizes to initiate the formation of the inflammasome complex: the CARD8 inflammasome directly recruits pro-caspase-1 (proCASP1) independently of PYCARD/ASC and promotes caspase-1 (CASP1) activation, which subsequently cleaves and activates inflammatory cytokines IL1B and IL18 and gasdermin-D (GSDMD), leading to pyroptosis. Also acts as a negative regulator of the NLRP3 inflammasome. May also act as an inhibitor of NF-kappa-B activation. Constitutes the precursor of the CARD8 inflammasome, which mediates autoproteolytic processing within the FIIND domain to generate the N-terminal and C-terminal parts, which are associated non-covalently in absence of pathogens and other damage-associated signals. In terms of biological role, regulatory part that prevents formation of the CARD8 inflammasome: in absence of pathogens and other damage-associated signals, interacts with the C-terminal part of CARD8 (Caspase recruitment domain-containing protein 8, C-terminus), preventing activation of the CARD8 inflammasome. In response to pathogen-associated signals, this part is ubiquitinated by the N-end rule pathway and degraded by the proteasome, releasing the cleaved C-terminal part of the protein, which polymerizes and forms the CARD8 inflammasome. Its function is as follows. Constitutes the active part of the CARD8 inflammasome. In absence of pathogens and other damage-associated signals, interacts with the N-terminal part of CARD8 (Caspase recruitment domain-containing protein 8, N-terminus), preventing activation of the CARD8 inflammasome. In response to pathogen-associated signals, the N-terminal part of CARD8 is degraded by the proteasome, releasing this form, which polymerizes to form the CARD8 inflammasome complex: the CARD8 inflammasome complex then directly recruits pro-caspase-1 (proCASP1) and promotes caspase-1 (CASP1) activation, leading to gasdermin-D (GSDMD) cleavage and subsequent pyroptosis. The polypeptide is Caspase recruitment domain-containing protein 8 (Pongo abelii (Sumatran orangutan)).